Here is a 147-residue protein sequence, read N- to C-terminus: UPF0306 protein KPK_0562 (147 aa).

Belongs to the UPF0306 family.

In Klebsiella pneumoniae (strain 342), this protein is UPF0306 protein KPK_0562.